A 247-amino-acid chain; its full sequence is Ubiquinone biosynthesis O-methyltransferase (247 aa).

S-adenosyl-L-methionine contacts are provided by arginine 39, glycine 70, aspartate 91, and methionine 134.

Belongs to the methyltransferase superfamily. UbiG/COQ3 family.

It catalyses the reaction a 3-demethylubiquinol + S-adenosyl-L-methionine = a ubiquinol + S-adenosyl-L-homocysteine + H(+). It carries out the reaction a 3-(all-trans-polyprenyl)benzene-1,2-diol + S-adenosyl-L-methionine = a 2-methoxy-6-(all-trans-polyprenyl)phenol + S-adenosyl-L-homocysteine + H(+). It functions in the pathway cofactor biosynthesis; ubiquinone biosynthesis. Functionally, O-methyltransferase that catalyzes the 2 O-methylation steps in the ubiquinone biosynthetic pathway. This Cereibacter sphaeroides (strain ATCC 17029 / ATH 2.4.9) (Rhodobacter sphaeroides) protein is Ubiquinone biosynthesis O-methyltransferase.